A 353-amino-acid polypeptide reads, in one-letter code: Photosystem II protein D1 (353 aa).

N-acetylthreonine is present on threonine 2. Threonine 2 bears the Phosphothreonine mark. Helical transmembrane passes span 29–46 (YIGWFGVLMIPTLLTATS), 118–133 (HFLLGVACYMGREWEL), and 142–156 (WIAVAYSAPVAAATA). Histidine 118 contacts chlorophyll a. Tyrosine 126 lines the pheophytin a pocket. Aspartate 170 and glutamate 189 together coordinate [CaMn4O5] cluster. The chain crosses the membrane as a helical span at residues 197–218 (FHMLGVAGVFGGSLFSAMHGSL). Chlorophyll a is bound at residue histidine 198. Residues histidine 215 and 264-265 (SF) contribute to the a quinone site. Histidine 215 contacts Fe cation. Fe cation is bound at residue histidine 272. A helical membrane pass occupies residues 274–288 (FLAAWPVVGIWFTAL). Residues histidine 332, glutamate 333, aspartate 342, and alanine 344 each contribute to the [CaMn4O5] cluster site. The propeptide occupies 345 to 353 (AVEVPSING).

It belongs to the reaction center PufL/M/PsbA/D family. In terms of assembly, PSII is composed of 1 copy each of membrane proteins PsbA, PsbB, PsbC, PsbD, PsbE, PsbF, PsbH, PsbI, PsbJ, PsbK, PsbL, PsbM, PsbT, PsbX, PsbY, PsbZ, Psb30/Ycf12, at least 3 peripheral proteins of the oxygen-evolving complex and a large number of cofactors. It forms dimeric complexes. The D1/D2 heterodimer binds P680, chlorophylls that are the primary electron donor of PSII, and subsequent electron acceptors. It shares a non-heme iron and each subunit binds pheophytin, quinone, additional chlorophylls, carotenoids and lipids. D1 provides most of the ligands for the Mn4-Ca-O5 cluster of the oxygen-evolving complex (OEC). There is also a Cl(-1) ion associated with D1 and D2, which is required for oxygen evolution. The PSII complex binds additional chlorophylls, carotenoids and specific lipids. is required as a cofactor. In terms of processing, tyr-161 forms a radical intermediate that is referred to as redox-active TyrZ, YZ or Y-Z. C-terminally processed by CTPA; processing is essential to allow assembly of the oxygen-evolving complex and thus photosynthetic growth.

The protein localises to the plastid. The protein resides in the chloroplast thylakoid membrane. It catalyses the reaction 2 a plastoquinone + 4 hnu + 2 H2O = 2 a plastoquinol + O2. In terms of biological role, photosystem II (PSII) is a light-driven water:plastoquinone oxidoreductase that uses light energy to abstract electrons from H(2)O, generating O(2) and a proton gradient subsequently used for ATP formation. It consists of a core antenna complex that captures photons, and an electron transfer chain that converts photonic excitation into a charge separation. The D1/D2 (PsbA/PsbD) reaction center heterodimer binds P680, the primary electron donor of PSII as well as several subsequent electron acceptors. The chain is Photosystem II protein D1 from Triticum aestivum (Wheat).